The sequence spans 463 residues: L-seryl-tRNA(Sec) selenium transferase (463 aa).

Residue Lys-295 is modified to N6-(pyridoxal phosphate)lysine.

Belongs to the SelA family. Homodecamer; pentamer of dimers. Binds only one seryl-tRNA(Sec) per dimer. Pyridoxal 5'-phosphate serves as cofactor.

The protein resides in the cytoplasm. The catalysed reaction is L-seryl-tRNA(Sec) + selenophosphate + H(+) = L-selenocysteinyl-tRNA(Sec) + phosphate. Its pathway is aminoacyl-tRNA biosynthesis; selenocysteinyl-tRNA(Sec) biosynthesis; selenocysteinyl-tRNA(Sec) from L-seryl-tRNA(Sec) (bacterial route): step 1/1. Converts seryl-tRNA(Sec) to selenocysteinyl-tRNA(Sec) required for selenoprotein biosynthesis. The chain is L-seryl-tRNA(Sec) selenium transferase from Salmonella paratyphi B (strain ATCC BAA-1250 / SPB7).